The following is a 98-amino-acid chain: NADH-ubiquinone oxidoreductase chain 4L (98 aa).

The next 3 membrane-spanning stretches (helical) occupy residues 1–21, 26–46, and 59–79; these read MTPTHFTISSAFLLGMMGLAF, LLSALLCLEAMMLALFIALSL, and APMLMLAFSACEASAGLALLV.

Belongs to the complex I subunit 4L family.

The protein resides in the mitochondrion membrane. The enzyme catalyses a ubiquinone + NADH + 5 H(+)(in) = a ubiquinol + NAD(+) + 4 H(+)(out). Core subunit of the mitochondrial membrane respiratory chain NADH dehydrogenase (Complex I) which catalyzes electron transfer from NADH through the respiratory chain, using ubiquinone as an electron acceptor. Part of the enzyme membrane arm which is embedded in the lipid bilayer and involved in proton translocation. The chain is NADH-ubiquinone oxidoreductase chain 4L (MT-ND4L) from Gadus morhua (Atlantic cod).